A 909-amino-acid chain; its full sequence is DNA mismatch repair protein MutS (909 aa).

Over residues 275 to 290 the composition is skewed to basic and acidic residues; sequence QKAERPPLSRPEREEQ. A disordered region spans residues 275–295; it reads QKAERPPLSRPEREEQGSTLF. 661–668 is an ATP binding site; sequence GPNMGGKS.

It belongs to the DNA mismatch repair MutS family.

Its function is as follows. This protein is involved in the repair of mismatches in DNA. It is possible that it carries out the mismatch recognition step. This protein has a weak ATPase activity. This Mesorhizobium japonicum (strain LMG 29417 / CECT 9101 / MAFF 303099) (Mesorhizobium loti (strain MAFF 303099)) protein is DNA mismatch repair protein MutS.